We begin with the raw amino-acid sequence, 511 residues long: Serine/threonine-protein kinase Nek3 (511 aa).

An N-acetylmethionine modification is found at M1. The segment at 1 to 282 (MDNYTVLRVI…EQILDEIKIS (282 aa)) is interaction with VAV2. The 252-residue stretch at 4-255 (YTVLRVIGQG…ATTLLCRGSL (252 aa)) folds into the Protein kinase domain. Residues 10 to 18 (IGQGSFGRA) and K33 each bind ATP. Catalysis depends on D125, which acts as the Proton acceptor. Residue T159 is modified to Phosphothreonine; by autocatalysis. Disordered stretches follow at residues 299–370 (LGEA…GPSS) and 443–511 (GPLS…GERA). The segment covering 309–321 (EEERGRKCSHTEL) has biased composition (basic and acidic residues). The span at 472–485 (LDEEDTDFEEDNEN) shows a compositional bias: acidic residues. The residue at position 477 (T477) is a Phosphothreonine. Gly residues predominate over residues 498-511 (YGDGPGGQLLGERA).

Belongs to the protein kinase superfamily. NEK Ser/Thr protein kinase family. NIMA subfamily. In terms of assembly, interacts with PXN, PRLR, VAV1 and VAV2 and this interaction is prolactin-dependent. It depends on Mg(2+) as a cofactor. Post-translationally, phosphorylation at Thr-477 regulates its catalytic activity. As to expression, brain.

It localises to the cytoplasm. Its subcellular location is the cell projection. The protein resides in the axon. The enzyme catalyses L-seryl-[protein] + ATP = O-phospho-L-seryl-[protein] + ADP + H(+). The catalysed reaction is L-threonyl-[protein] + ATP = O-phospho-L-threonyl-[protein] + ADP + H(+). In terms of biological role, protein kinase which influences neuronal morphogenesis and polarity through effects on microtubules. Regulates microtubule acetylation in neurons. Contributes to prolactin-mediated phosphorylation of PXN and VAV2. In Mus musculus (Mouse), this protein is Serine/threonine-protein kinase Nek3 (Nek3).